A 1069-amino-acid chain; its full sequence is MPTAGSKKKAPTPQISCLTSESYTQLDFLPDKLRTKLLPFQKDGIVFALRRDGRCMVADEMGLGKTIQAIAIAYFYKEEWPLLIVVPSSLRYPWIEELEKWIPELEPEEINVVMNKTDIGRIPGSRVTVLGYGLLTTDAETLLDALNTQNFRVVIVDESHYMKSRTAARSKILLPMVQKARRAILLTGTPALGRPEELFMQIEALFPQKFGTWIEYAKRYCNAHVRYFGKRRQWDCRGASNLSELHQLLNDIMIRRLKSEVLSQLPPKVRQRIPFDLPPAAVKELNASFEEWQKLMRAPNSGAMETVMGLITRMFKQTAIAKAGAVKDYIKMLLQNDSLKFLVFAHHLSMLQACTEAVIESKSRYIRIDGSVPSSERIHLVNQFQKDPDTRVAILSIQAAGQGLTFTAASHVVFAELYWDPGHIKQAEDRAHRIGQCSSVNIHYLIANGTLDSLMWAMLNRKAQVTGSTLNGRKEKLQATEDDKEKWGFLQFAEAWTPSDSFEELKDSVFTHFEKEKQHDIRSFFLPKLKKRQLETTCDDPEAFKEKITVASDPRKMATSDSTADKNGCEPEAKRLKSLSTEDHSSALEEGPSLQARATSMEVVHEVKPPLASPALPEKGWQCGFCTFLNNPGLPYCEMCENPRSRAAGRNHLQDNNKNDEDAAQESTSKSDQAGLECERQCPERLEAEQSANSKEEALEGGGEDRLPSQPEIGQLNNSGTLPVRETFMFCASRNTDRIHLYTKDGKPMNCNFIPLDIKLDLWEDLPATFQLKQNRSLILRFVREWSSLTAMKQRVLRKSGQLFCSPLLASEEITKQQAKENNTRRYITKEDVAKASMNKVKSDGGHIRLITKESMTQDSSLKKIDSACVPSLNPCPADLTVEPSPSKGYIQAVDKEGRPLCLRCQHPTCQPEQTAKASAWDSRFCSLKCQEEFWIRSNNSYLRAQVFATEHGVCQHCGVDAQELFLRMRDAPKSHRKSLLNAAWTAKLPLEQLNEMLRNPGEGHFWQVDHIRPVYEGGGQCSLDNLQTLCTVCHKERTAQQAKERSQVRRLSLATKHGSDITRFLVKK.

The 163-residue stretch at 46-208 (VFALRRDGRC…FMQIEALFPQ (163 aa)) folds into the Helicase ATP-binding domain. The segment at 46–481 (VFALRRDGRC…GRKEKLQATE (436 aa)) is DNA annealing helicase activity. Residue 59–66 (DEMGLGKT) participates in ATP binding. Positions 157–160 (DESH) match the DEAH box motif. Residues 325–485 (AVKDYIKMLL…KLQATEDDKE (161 aa)) form the Helicase C-terminal domain. The PIP-box motif lies at 518–525 (QHDIRSFF). A RanBP2-type zinc finger spans residues 617–646 (PEKGWQCGFCTFLNNPGLPYCEMCENPRSR). The interval 648-720 (AGRNHLQDNN…PEIGQLNNSG (73 aa)) is disordered. Composition is skewed to basic and acidic residues over residues 652–661 (HLQDNNKNDE) and 677–707 (ECER…EDRL). In terms of domain architecture, HNH spans 1001-1041 (PGEGHFWQVDHIRPVYEGGGQCSLDNLQTLCTVCHKERTAQ). Positions 1001–1069 (PGEGHFWQVD…SDITRFLVKK (69 aa)) are endonuclease activity. Positions 1064–1068 (RFLVK) match the APIM motif motif.

The protein belongs to the SNF2/RAD54 helicase family. As to quaternary structure, interacts (via PIP-box and RanBP2-type zinc finger) with PCNA (when PCNA is polyubiquitinated via 'Lys-63'-linked polyubiquitin).

It localises to the nucleus. It is found in the chromosome. DNA annealing helicase and endonuclease required to maintain genome stability at stalled or collapsed replication forks by facilitating fork restart and limiting inappropriate recombination that could occur during template switching events. Recruited to the sites of stalled DNA replication by polyubiquitinated PCNA and acts as a structure-specific endonuclease that cleaves the replication fork D-loop intermediate, generating an accessible 3'-OH group in the template of the leading strand, which is amenable to extension by DNA polymerase. In addition to endonuclease activity, also catalyzes the fork regression via annealing helicase activity in order to prevent disintegration of the replication fork and the formation of double-strand breaks. This chain is DNA annealing helicase and endonuclease ZRANB3 (Zranb3), found in Mus musculus (Mouse).